A 1058-amino-acid polypeptide reads, in one-letter code: SMC5-SMC6 complex localization factor protein 1 (1058 aa).

BRCT domains follow at residues 12–77 (MTGF…IHSA) and 119–196 (GAPG…GDFL). The interval 410–1058 (PRGVLNLIES…MMCRSVMEFS (649 aa)) is NSE5-like domain; mediates interaction with SLF2. ANK repeat units follow at residues 806 to 836 (KGETALHRACINNQVEKLILLLSLPGIDINV), 840 to 869 (AGWTPLHEACNYGNTVCVQEILQRCPEVDL), and 874 to 903 (DGVTPLHDALSNGHVEIGKLLLQHGGPVLL). Lysine 931 is covalently cross-linked (Glycyl lysine isopeptide (Lys-Gly) (interchain with G-Cter in SUMO2)).

As to quaternary structure, interacts (via N-terminus) with SLF2; this interaction links RAD18 to the SMC5-SMC6 complex. Interacts (via BRCT domains) with RAD18; this interaction occurs in a SLF2-independent manner. Interacts with SMC6. Interacts (via BRCT domains) with RAD18 (via C-terminus and phosphorylated form); this interaction is required for efficient repair of UV-induced DNA damage.

It is found in the nucleus. It localises to the cytoplasm. Its subcellular location is the cytoskeleton. The protein localises to the microtubule organizing center. The protein resides in the centrosome. Plays a role in the DNA damage response (DDR) pathway by regulating postreplication repair of UV-damaged DNA and genomic stability maintenance. The SLF1-SLF2 complex acts to link RAD18 with the SMC5-SMC6 complex at replication-coupled interstrand cross-links (ICL) and DNA double-strand breaks (DSBs) sites on chromatin during DNA repair in response to stalled replication forks. Promotes the recruitment of SLF2 and the SMC5-SMC6 complex to DNA lesions. This chain is SMC5-SMC6 complex localization factor protein 1, found in Homo sapiens (Human).